The primary structure comprises 170 residues: Adenine phosphoribosyltransferase (170 aa).

This sequence belongs to the purine/pyrimidine phosphoribosyltransferase family. As to quaternary structure, homodimer.

Its subcellular location is the cytoplasm. The catalysed reaction is AMP + diphosphate = 5-phospho-alpha-D-ribose 1-diphosphate + adenine. It participates in purine metabolism; AMP biosynthesis via salvage pathway; AMP from adenine: step 1/1. Functionally, catalyzes a salvage reaction resulting in the formation of AMP, that is energically less costly than de novo synthesis. The chain is Adenine phosphoribosyltransferase from Alkaliphilus metalliredigens (strain QYMF).